A 111-amino-acid chain; its full sequence is Large ribosomal subunit protein uL22 (111 aa).

It belongs to the universal ribosomal protein uL22 family. In terms of assembly, part of the 50S ribosomal subunit.

In terms of biological role, this protein binds specifically to 23S rRNA; its binding is stimulated by other ribosomal proteins, e.g. L4, L17, and L20. It is important during the early stages of 50S assembly. It makes multiple contacts with different domains of the 23S rRNA in the assembled 50S subunit and ribosome. The globular domain of the protein is located near the polypeptide exit tunnel on the outside of the subunit, while an extended beta-hairpin is found that lines the wall of the exit tunnel in the center of the 70S ribosome. The sequence is that of Large ribosomal subunit protein uL22 from Citrifermentans bemidjiense (strain ATCC BAA-1014 / DSM 16622 / JCM 12645 / Bem) (Geobacter bemidjiensis).